A 493-amino-acid chain; its full sequence is EGF-containing fibulin-like extracellular matrix protein 1 (493 aa).

Residues 1–17 (MLKALFLTMLTLALVKS) form the signal peptide. The EGF-like 1; atypical domain maps to 26-71 (YTQCTDGYEWDPVRQQCKDIDECDIVPDACKGGMKCVNHYGGYLCL). The region spanning 173-213 (DIDECTAGTHNCRADQVCINLRGSFACQCPPGYQKRGEQCV) is the EGF-like 2; calcium-binding domain. 15 disulfide bridges follow: Cys177–Cys190, Cys184–Cys199, Cys201–Cys212, Cys218–Cys228, Cys224–Cys237, Cys239–Cys252, Cys258–Cys268, Cys264–Cys277, Cys279–Cys292, Cys298–Cys309, Cys305–Cys318, Cys320–Cys332, Cys338–Cys350, Cys344–Cys359, and Cys365–Cys377. An EGF-like 3; calcium-binding domain is found at 214 to 253 (DIDECTIPPYCHQRCVNTPGSFYCQCSPGFQLAANNYTCV). A glycan (N-linked (GlcNAc...) asparagine) is linked at Asn249. The EGF-like 4; calcium-binding domain occupies 254 to 293 (DINECDASNQCAQQCYNILGSFICQCNQGYELSSDRLNCE). The interval 259 to 493 (DASNQCAQQC…LTIIVGPFSF (235 aa)) is mediates interaction with TIMP3. An EGF-like 5; calcium-binding domain is found at 294 to 333 (DIDECRTSSYLCQYQCVNEPGKFSCMCPQGYQVVRSRTCQ). The 45-residue stretch at 334–378 (DINECETTNECREDEMCWNYHGGFRCYPRNPCQDPYILTPENRCV) folds into the EGF-like 6; calcium-binding domain.

This sequence belongs to the fibulin family. In terms of assembly, interacts with ECM1. Interacts with TIMP3. As to expression, in the eye, associated with photoreceptor outer and inner segment regions, the nerve fiber layer, outer nuclear layer and inner and outer plexiform layers of the retina.

It is found in the secreted. The protein localises to the extracellular space. The protein resides in the extracellular matrix. Binds EGFR, the EGF receptor, inducing EGFR autophosphorylation and the activation of downstream signaling pathways. May play a role in cell adhesion and migration. May function as a negative regulator of chondrocyte differentiation. In the olfactory epithelium, it may regulate glial cell migration, differentiation and the ability of glial cells to support neuronal neurite outgrowth. The chain is EGF-containing fibulin-like extracellular matrix protein 1 (EFEMP1) from Homo sapiens (Human).